Consider the following 164-residue polypeptide: Cytochrome c-type biogenesis protein CcmE (164 aa).

The Cytoplasmic portion of the chain corresponds to 1 to 7 (MTRKQRR). A helical; Signal-anchor for type II membrane protein transmembrane segment spans residues 8 to 28 (LLMIGGAGVVLVVAVGLVLNA). Residues 29–164 (MRGSIVFFST…ASADAAGPSR (136 aa)) are Periplasmic-facing. Heme contacts are provided by His-122 and Tyr-126. Positions 137–149 (KQGHWKDDYEKKP) are enriched in basic and acidic residues. The interval 137 to 164 (KQGHWKDDYEKKPPGAPGASADAAGPSR) is disordered. Residues 153 to 164 (PGASADAAGPSR) are compositionally biased toward low complexity.

It belongs to the CcmE/CycJ family.

It is found in the cell inner membrane. Its function is as follows. Heme chaperone required for the biogenesis of c-type cytochromes. Transiently binds heme delivered by CcmC and transfers the heme to apo-cytochromes in a process facilitated by CcmF and CcmH. The polypeptide is Cytochrome c-type biogenesis protein CcmE (Rhodopseudomonas palustris (strain BisB5)).